The sequence spans 822 residues: LPS-assembly protein LptD (822 aa).

Positions 1–37 are cleaved as a signal peptide; it reads MRRASRSPFILSPVAHAVSRLVLCATLGWTYAGSGHA. The disordered stretch occupies residues 38-97; it reads QVPAPAGGSEVPLGARPPASAPVAAQQETPLKLKSSPALAEEVPNGPGDEGPTFVFGDSV.

Belongs to the LptD family. In terms of assembly, component of the lipopolysaccharide transport and assembly complex. Interacts with LptE and LptA.

Its subcellular location is the cell outer membrane. Functionally, together with LptE, is involved in the assembly of lipopolysaccharide (LPS) at the surface of the outer membrane. This Polaromonas sp. (strain JS666 / ATCC BAA-500) protein is LPS-assembly protein LptD.